The chain runs to 292 residues: Ribosomal protein L11 methyltransferase (292 aa).

4 residues coordinate S-adenosyl-L-methionine: Thr-144, Gly-165, Asp-187, and Asn-229.

Belongs to the methyltransferase superfamily. PrmA family.

The protein resides in the cytoplasm. The catalysed reaction is L-lysyl-[protein] + 3 S-adenosyl-L-methionine = N(6),N(6),N(6)-trimethyl-L-lysyl-[protein] + 3 S-adenosyl-L-homocysteine + 3 H(+). Its function is as follows. Methylates ribosomal protein L11. This Pseudomonas putida (strain ATCC 47054 / DSM 6125 / CFBP 8728 / NCIMB 11950 / KT2440) protein is Ribosomal protein L11 methyltransferase.